We begin with the raw amino-acid sequence, 541 residues long: Arginine--tRNA ligase (541 aa).

The 'HIGH' region motif lies at 119–129; it reads ANPTGPLHIGH.

It belongs to the class-I aminoacyl-tRNA synthetase family. In terms of assembly, monomer.

Its subcellular location is the cytoplasm. The enzyme catalyses tRNA(Arg) + L-arginine + ATP = L-arginyl-tRNA(Arg) + AMP + diphosphate. This chain is Arginine--tRNA ligase, found in Helicobacter pylori (strain P12).